Reading from the N-terminus, the 1233-residue chain is Integrator complex subunit 4 homolog (1233 aa).

HEAT repeat units follow at residues Ser236–Lys273 and Ser275–Ser310. The disordered stretch occupies residues Arg426–Pro473. Over residues Gln428–Gln462 the composition is skewed to low complexity. 3 HEAT repeats span residues Ile487–Glu524, Phe525–Ile561, and Glu563–Ser597. Over residues Asn767–Asn792 the composition is skewed to low complexity. Disordered regions lie at residues Asn767–Asp796 and Asp993–Thr1057. Over residues Glu1000–Asn1013 the composition is skewed to acidic residues. Positions Glu1014–Asn1030 are enriched in basic and acidic residues. Over residues Lys1046–Thr1057 the composition is skewed to low complexity.

The protein belongs to the Integrator subunit 4 family. In terms of assembly, component of the Integrator complex. The core complex associates with protein phosphatase 2A subunits, to form the Integrator-PP2A (INTAC) complex.

It localises to the nucleus. The protein resides in the cytoplasm. Its function is as follows. Component of the integrator complex, a multiprotein complex that terminates RNA polymerase II (Pol II) transcription in the promoter-proximal region of genes. The integrator complex provides a quality checkpoint during transcription elongation by driving premature transcription termination of transcripts that are unfavorably configured for transcriptional elongation: the complex terminates transcription by (1) catalyzing dephosphorylation of the C-terminal domain (CTD) of Pol II subunit polr2a, (2) degrading the exiting nascent RNA transcript via endonuclease activity and (3) promoting the release of Pol II from bound DNA. The integrator complex is also involved in terminating the synthesis of non-coding Pol II transcripts, such as enhancer RNAs (eRNAs), small nuclear RNAs (snRNAs), telomerase RNAs and long non-coding RNAs (lncRNAs). This chain is Integrator complex subunit 4 homolog (ints4), found in Dictyostelium discoideum (Social amoeba).